We begin with the raw amino-acid sequence, 276 residues long: Putative oxidoreductase SadH (276 aa).

Serine 142 serves as a coordination point for substrate. The active-site Proton acceptor is the tyrosine 155.

Belongs to the short-chain dehydrogenases/reductases (SDR) family.

Required for maintaining the appropriate mycolic acid composition and permeability of the envelope on its exposure to acidic pH. This Mycobacterium tuberculosis (strain CDC 1551 / Oshkosh) protein is Putative oxidoreductase SadH (sadH).